Consider the following 288-residue polypeptide: Probable aquaporin PIP1-2 (288 aa).

Residues 1 to 37 form a disordered region; it reads MEGKEEDVRLGANKFSERQPIGTAAQGSDDKDYKEPP. 2 helical membrane passes run 57 to 77 and 92 to 114; these read IAEF…VMGV and IAWS…SGGH. The NPA 1 signature appears at 116–118; sequence NPA. 3 helical membrane-spanning segments follow: residues 135-155, 177-197, and 211-231; these read LFYM…VKGF, GDGL…VFSA, and ILAP…TIPI. The short motif at 237-239 is the NPA 2 element; it reads NPA. The helical transmembrane segment at 259–279 threads the bilayer; that stretch reads IFWVGPFIGAALAAIYHQVVI.

Belongs to the MIP/aquaporin (TC 1.A.8) family. PIP (TC 1.A.8.11) subfamily. In terms of tissue distribution, expressed in roots, leaves and anthers.

The protein localises to the cell membrane. In terms of biological role, aquaporins facilitate the transport of water and small neutral solutes across cell membranes. In Oryza sativa subsp. japonica (Rice), this protein is Probable aquaporin PIP1-2 (PIP1-2).